Here is a 770-residue protein sequence, read N- to C-terminus: Lysine-specific histone demethylase 1 (770 aa).

The interval 1-21 (MSSDTGSEYLDEEIRGDELGP) is disordered. The region spanning 28 to 126 (LAAAASAARL…FGRYVRSTKI (99 aa)) is the SWIRM domain. An FAD-binding site is contributed by 137 to 165 (VIVIGAGAAGISAATQLESFGFDVIVLEA). The disordered stretch occupies residues 718 to 739 (NEAVADIPNAPNAPNAQKPEEI).

The protein belongs to the flavin monoamine oxidase family. Probably part of a large repressor complex. Interacts with CoREST protein spr-1. Interacts with chromobox protein homolog hpl-1. FAD serves as cofactor.

The protein localises to the nucleus. The catalysed reaction is N(6),N(6)-dimethyl-L-lysyl(4)-[histone H3] + 2 A + 2 H2O = L-lysyl(4)-[histone H3] + 2 formaldehyde + 2 AH2. Its function is as follows. Histone demethylase that specifically demethylates 'Lys-4' of histone H3, a specific tag for epigenetic transcriptional activation, thereby acting as a corepressor. Acts by oxidizing the substrate by FAD to generate the corresponding imine that is subsequently hydrolyzed. Demethylates both mono- and di-methylated 'Lys-4' of histone H3. May be involved in H3 demethylation in mitotic cells including gut and embryonic cells. Participates in the transcriptional repression of the presenilin protein hop-1. May act via the formation of a multiprotein complex that remodel or modify the chromatin. Together with met-2, set-17 and set-26, required for transgenerational fertility. Plays a role in developmental growth and lifespan regulation in response to ultraviolet-induced damage. The polypeptide is Lysine-specific histone demethylase 1 (Caenorhabditis elegans).